Consider the following 355-residue polypeptide: Probable nitronate monooxygenase (355 aa).

FMN contacts are provided by residues N71, Q175, G180, G218, and 237 to 240; that span reads QMGT.

It belongs to the nitronate monooxygenase family. NMO class I subfamily. Requires FMN as cofactor.

It catalyses the reaction 3 propionate 3-nitronate + 3 O2 + H2O = 3 3-oxopropanoate + 2 nitrate + nitrite + H2O2 + 3 H(+). Nitronate monooxygenase that uses molecular oxygen to catalyze the oxidative denitrification of alkyl nitronates. Acts on propionate 3-nitronate (P3N), the presumed physiological substrate. Probably functions in the detoxification of P3N, a metabolic poison produced by plants and fungi as a defense mechanism. The protein is Probable nitronate monooxygenase of Staphylococcus aureus (strain JH1).